Here is a 267-residue protein sequence, read N- to C-terminus: Tryptophan synthase alpha chain (267 aa).

Catalysis depends on proton acceptor residues Glu-49 and Asp-60.

It belongs to the TrpA family. In terms of assembly, tetramer of two alpha and two beta chains.

The enzyme catalyses (1S,2R)-1-C-(indol-3-yl)glycerol 3-phosphate + L-serine = D-glyceraldehyde 3-phosphate + L-tryptophan + H2O. Its pathway is amino-acid biosynthesis; L-tryptophan biosynthesis; L-tryptophan from chorismate: step 5/5. The alpha subunit is responsible for the aldol cleavage of indoleglycerol phosphate to indole and glyceraldehyde 3-phosphate. In Cyanothece sp. (strain PCC 7425 / ATCC 29141), this protein is Tryptophan synthase alpha chain.